The chain runs to 347 residues: NADH-ubiquinone oxidoreductase chain 2 (347 aa).

Helical transmembrane passes span 13–33 (VILG…WIGF), 59–79 (YFFT…LNLM), 96–116 (MIMT…FWVP), 122–142 (IPLS…LTVL), 149–169 (INLT…GWGG), 178–198 (IMAY…IYNP), 200–220 (MTLL…MLFM), 240–260 (IVTI…LTGF), 276–296 (IILP…YMRL), and 325–345 (LLTP…MIII).

This sequence belongs to the complex I subunit 2 family. In terms of assembly, core subunit of respiratory chain NADH dehydrogenase (Complex I) which is composed of 45 different subunits. Interacts with TMEM242.

Its subcellular location is the mitochondrion inner membrane. It catalyses the reaction a ubiquinone + NADH + 5 H(+)(in) = a ubiquinol + NAD(+) + 4 H(+)(out). Functionally, core subunit of the mitochondrial membrane respiratory chain NADH dehydrogenase (Complex I) which catalyzes electron transfer from NADH through the respiratory chain, using ubiquinone as an electron acceptor. Essential for the catalytic activity and assembly of complex I. The chain is NADH-ubiquinone oxidoreductase chain 2 from Molossus ater (Black mastiff bat).